Here is a 1223-residue protein sequence, read N- to C-terminus: DNA-directed RNA polymerase subunit beta'' (1223 aa).

4 residues coordinate Zn(2+): cysteine 233, cysteine 307, cysteine 314, and cysteine 317.

This sequence belongs to the RNA polymerase beta' chain family. RpoC2 subfamily. In plastids the minimal PEP RNA polymerase catalytic core is composed of four subunits: alpha, beta, beta', and beta''. When a (nuclear-encoded) sigma factor is associated with the core the holoenzyme is formed, which can initiate transcription. Requires Zn(2+) as cofactor.

It is found in the plastid. Its subcellular location is the chloroplast. It carries out the reaction RNA(n) + a ribonucleoside 5'-triphosphate = RNA(n+1) + diphosphate. DNA-dependent RNA polymerase catalyzes the transcription of DNA into RNA using the four ribonucleoside triphosphates as substrates. In Mesostigma viride (Green alga), this protein is DNA-directed RNA polymerase subunit beta''.